Here is a 1331-residue protein sequence, read N- to C-terminus: ABC multidrug transporter MDR2 (1331 aa).

Residues Met-1–Pro-50 are disordered. The span at Ser-31–Asn-41 shows a compositional bias: basic and acidic residues. Transmembrane regions (helical) follow at residues Met-93–Phe-113, Tyr-147–Ile-167, Lys-219–Val-239, and Trp-242–Ile-262. The ABC transmembrane type-1 1 domain maps to Ala-97–Ser-387. A glycan (N-linked (GlcNAc...) asparagine) is linked at Asn-293. 2 consecutive transmembrane segments (helical) span residues Leu-325 to Trp-345 and Leu-358 to Val-378. The 246-residue stretch at Ile-422–Ala-667 folds into the ABC transporter 1 domain. Gly-457 to Ser-464 contacts ATP. A glycan (N-linked (GlcNAc...) asparagine) is linked at Asn-529. Transmembrane regions (helical) follow at residues Leu-762–Phe-782 and Leu-808–Phe-828. An ABC transmembrane type-1 2 domain is found at Gly-764–Lys-1051. Asn-860 carries an N-linked (GlcNAc...) asparagine glycan. 4 helical membrane passes run Leu-884–Phe-904, Leu-910–Leu-930, Ala-995–Leu-1015, and Phe-1025–Phe-1045. An ABC transporter 2 domain is found at Ile-1086–Met-1324. Asn-1108 carries an N-linked (GlcNAc...) asparagine glycan. Position 1121–1128 (Gly-1121–Ser-1128) interacts with ATP.

This sequence belongs to the ABC transporter superfamily. ABCB family. Multidrug resistance exporter (TC 3.A.1.201) subfamily.

It is found in the cell membrane. It carries out the reaction itraconazole(in) + ATP + H2O = itraconazole(out) + ADP + phosphate + H(+). In terms of biological role, ABC-type efflux transporter involved in the modulation susceptibility to itraconazole. This Trichophyton rubrum (strain ATCC MYA-4607 / CBS 118892) (Athlete's foot fungus) protein is ABC multidrug transporter MDR2.